The sequence spans 343 residues: Cysteine proteinase 1 (343 aa).

The first 18 residues, 1-18, serve as a signal peptide directing secretion; it reads MKVILLFVLAVFTVFVSS. The propeptide at 19–117 is activation peptide; sequence RGIPLEEQSQ…DYLDDEFINS (99 aa). Disulfide bonds link Cys139-Cys190, Cys173-Cys224, and Cys279-Cys332. Cys142 is an active-site residue. Active-site residues include His286 and Asn311.

The protein belongs to the peptidase C1 family. In terms of processing, phosphoglycosylated, contains GlcNAc-alpha-1-P-Ser residues.

The protein resides in the lysosome. Functionally, cysteine proteinases 1 and 2 are believed to participate in the breakdown of protein during differentiation of Dictyostelium as a response to starvation. This chain is Cysteine proteinase 1 (cprA), found in Dictyostelium discoideum (Social amoeba).